We begin with the raw amino-acid sequence, 214 residues long: Large ribosomal subunit protein uL18 (214 aa).

It belongs to the universal ribosomal protein uL18 family. In terms of assembly, part of the 50S ribosomal subunit. Contacts the 5S and 23S rRNAs.

In terms of biological role, this is one of the proteins that bind and probably mediate the attachment of the 5S RNA into the large ribosomal subunit, where it forms part of the central protuberance. The sequence is that of Large ribosomal subunit protein uL18 from Aeropyrum pernix (strain ATCC 700893 / DSM 11879 / JCM 9820 / NBRC 100138 / K1).